We begin with the raw amino-acid sequence, 495 residues long: Glutamate--tRNA ligase (495 aa).

The short motif at 12–22 (PSPTGHLHIGN) is the 'HIGH' region element. The 'KMSKS' region signature appears at 259-263 (KLSKR). Lysine 262 lines the ATP pocket.

This sequence belongs to the class-I aminoacyl-tRNA synthetase family. Glutamate--tRNA ligase type 1 subfamily. As to quaternary structure, monomer.

Its subcellular location is the cytoplasm. The enzyme catalyses tRNA(Glu) + L-glutamate + ATP = L-glutamyl-tRNA(Glu) + AMP + diphosphate. Its function is as follows. Catalyzes the attachment of glutamate to tRNA(Glu) in a two-step reaction: glutamate is first activated by ATP to form Glu-AMP and then transferred to the acceptor end of tRNA(Glu). The sequence is that of Glutamate--tRNA ligase from Latilactobacillus sakei subsp. sakei (strain 23K) (Lactobacillus sakei subsp. sakei).